The primary structure comprises 210 residues: Imidazole glycerol phosphate synthase subunit HisH (210 aa).

One can recognise a Glutamine amidotransferase type-1 domain in the interval 7–210 (KVVIIDTGCA…SQLIKNFLEM (204 aa)). The Nucleophile role is filled by cysteine 82. Residues histidine 192 and glutamate 194 contribute to the active site.

In terms of assembly, heterodimer of HisH and HisF.

Its subcellular location is the cytoplasm. The enzyme catalyses 5-[(5-phospho-1-deoxy-D-ribulos-1-ylimino)methylamino]-1-(5-phospho-beta-D-ribosyl)imidazole-4-carboxamide + L-glutamine = D-erythro-1-(imidazol-4-yl)glycerol 3-phosphate + 5-amino-1-(5-phospho-beta-D-ribosyl)imidazole-4-carboxamide + L-glutamate + H(+). It carries out the reaction L-glutamine + H2O = L-glutamate + NH4(+). It participates in amino-acid biosynthesis; L-histidine biosynthesis; L-histidine from 5-phospho-alpha-D-ribose 1-diphosphate: step 5/9. Functionally, IGPS catalyzes the conversion of PRFAR and glutamine to IGP, AICAR and glutamate. The HisH subunit catalyzes the hydrolysis of glutamine to glutamate and ammonia as part of the synthesis of IGP and AICAR. The resulting ammonia molecule is channeled to the active site of HisF. The sequence is that of Imidazole glycerol phosphate synthase subunit HisH from Photobacterium profundum (strain SS9).